Here is a 160-residue protein sequence, read N- to C-terminus: Cyclic pyranopterin monophosphate synthase (160 aa).

Substrate contacts are provided by residues Leu-75–His-77 and Met-113–Glu-114. Asp-128 is an active-site residue.

It belongs to the MoaC family. In terms of assembly, homohexamer; trimer of dimers.

The catalysed reaction is (8S)-3',8-cyclo-7,8-dihydroguanosine 5'-triphosphate = cyclic pyranopterin phosphate + diphosphate. Its pathway is cofactor biosynthesis; molybdopterin biosynthesis. Catalyzes the conversion of (8S)-3',8-cyclo-7,8-dihydroguanosine 5'-triphosphate to cyclic pyranopterin monophosphate (cPMP). The sequence is that of Cyclic pyranopterin monophosphate synthase from Methylobacterium sp. (strain 4-46).